The primary structure comprises 237 residues: Small ribosomal subunit protein eS4 (237 aa).

An S4 RNA-binding domain is found at 37–100; it reads IPLAVLLRDV…NEYYRIIPDP (64 aa).

It belongs to the eukaryotic ribosomal protein eS4 family.

The polypeptide is Small ribosomal subunit protein eS4 (Caldivirga maquilingensis (strain ATCC 700844 / DSM 13496 / JCM 10307 / IC-167)).